The chain runs to 616 residues: Glycoprotein Q1 (616 aa).

An N-terminal signal peptide occupies residues 1-24; it reads MRPPRRSAPILVCAISMATALSNA. 5 N-linked (GlcNAc...) asparagine; by host glycosylation sites follow: Asn-23, Asn-44, Asn-282, Asn-330, and Asn-351.

As to quaternary structure, interacts with isoform gQ2. The heterodimer gQ1-gQ2 associates with the glycoprotein complex gH-gL to form a tetrameric complex. The gH/gL/gQ1/gQ2 complex binds to host TNFRSF4. Post-translationally, glycosylated by host.

The protein resides in the virion. The protein localises to the host endoplasmic reticulum lumen. Functionally, plays a role in virus entry by participating in host receptor binding at the cell surface. The protein is Glycoprotein Q1 of Homo sapiens (Human).